Here is a 329-residue protein sequence, read N- to C-terminus: D-alanine--D-alanine ligase (329 aa).

In terms of domain architecture, ATP-grasp spans 120 to 326; sequence KLWLSAIGIP…FAHYLEQILR (207 aa). 150 to 205 serves as a coordination point for ATP; sequence ALAKWGKVFIKAASQGSSVGCYSASNETDLLQGIKDAFGYSEQVLIEKAVKPRELE. 3 residues coordinate Mg(2+): Asp-280, Glu-293, and Asn-295.

Belongs to the D-alanine--D-alanine ligase family. Mg(2+) serves as cofactor. The cofactor is Mn(2+).

The protein localises to the cytoplasm. It carries out the reaction 2 D-alanine + ATP = D-alanyl-D-alanine + ADP + phosphate + H(+). The protein operates within cell wall biogenesis; peptidoglycan biosynthesis. Its function is as follows. Cell wall formation. This Aeromonas salmonicida (strain A449) protein is D-alanine--D-alanine ligase.